Consider the following 377-residue polypeptide: Dehydrogenase/reductase SDR family member 13 (377 aa).

Residues 1-25 (MEALLLGVGLLLGAYVLVYYNLVKA) form the signal peptide. Positions 46 and 48 each coordinate NAD(+). Ser-170 serves as a coordination point for substrate. Residues Tyr-197, Lys-201, and Ser-232 each contribute to the NAD(+) site. Catalysis depends on Tyr-197, which acts as the Proton acceptor. Residues 310-363 (LAGLGPGEDAESDEDSQPEDPGTPSSPSSPHPEEPTVSELYPSPQSSTDRSTVT) are disordered. A compositionally biased stretch (acidic residues) spans 317–327 (EDAESDEDSQP). Over residues 328–337 (EDPGTPSSPS) the composition is skewed to low complexity. Residues 352–363 (SPQSSTDRSTVT) are compositionally biased toward polar residues.

It belongs to the short-chain dehydrogenases/reductases (SDR) family.

The protein resides in the secreted. Putative oxidoreductase. This Bos taurus (Bovine) protein is Dehydrogenase/reductase SDR family member 13 (DHRS13).